Reading from the N-terminus, the 461-residue chain is tRNA modification GTPase MnmE (461 aa).

Lys32, Glu89, and Lys128 together coordinate (6S)-5-formyl-5,6,7,8-tetrahydrofolate. The 164-residue stretch at 224–387 (GHALSIVGKP…LGQKISAFFP (164 aa)) folds into the TrmE-type G domain. Residue Asn234 participates in K(+) binding. GTP-binding positions include 234–239 (NAGKSS), 253–259 (SDIKGTT), and 278–281 (DTAG). Mg(2+) is bound at residue Ser238. Ser253, Ile255, and Thr258 together coordinate K(+). Thr259 contributes to the Mg(2+) binding site. Lys461 is a binding site for (6S)-5-formyl-5,6,7,8-tetrahydrofolate.

It belongs to the TRAFAC class TrmE-Era-EngA-EngB-Septin-like GTPase superfamily. TrmE GTPase family. Homodimer. Heterotetramer of two MnmE and two MnmG subunits. It depends on K(+) as a cofactor.

It localises to the cytoplasm. Functionally, exhibits a very high intrinsic GTPase hydrolysis rate. Involved in the addition of a carboxymethylaminomethyl (cmnm) group at the wobble position (U34) of certain tRNAs, forming tRNA-cmnm(5)s(2)U34. In Helicobacter pylori (strain HPAG1), this protein is tRNA modification GTPase MnmE.